The following is a 304-amino-acid chain: DCN1-like protein 3 (304 aa).

Disordered regions lie at residues 1-86 and 284-304; these read MGQC…AEES and EGEGRGALSSGPEGLCPEEQT. Residue G2 is the site of N-myristoyl glycine attachment. One can recognise a DCUN1 domain in the interval 86–278; it reads SSLQRLEELF…LFDTFVEWEM (193 aa).

Part of a complex containing DCUN1D3, CUL3 and RBX1. Interacts (via the DCUN1 domain) with the unneddylated cullins: interacts with CUL1, CUL2, CUL3, CUL4A, CUL4B and CUL5; these interactions promote the cullin neddylation and the identity of the cullin dictates the affinity of the interaction. Interacts preferentially with CUL3; this interaction triggers the relocalization of CUL3 to the cell membrane where CUL3 is neddylated. Interacts (via DCUN1 domain) with RBX1. May also interact with regulators or subunits of cullin-RING ligases such as RNF7, ELOB and DDB1; these interactions are bridged by cullins. Interacts (via DCUN1 domain) with CAND1; this interaction is bridged by cullins and strongly inhibits cullin neddylation. These CAND-cullin-DCNL complexes can only be neddylated in the presence of a substrate adapter. Interacts (via DCUN1 domain) with the N-terminally acetylated form of UBE2M and UBE2F.

It localises to the cell membrane. Its subcellular location is the cytoplasm. It is found in the nucleus. The protein resides in the perinuclear region. Its function is as follows. Contributes to the neddylation of all cullins by transferring NEDD8 from N-terminally acetylated NEDD8-conjugating E2s enzyme to different cullin C-terminal domain-RBX complexes and may play a role in the cell cycle progression by regulating the SCF ubiquitin E3 ligase complex, after UV damage. At the cell membrane, can promote and as well inhibit cullins neddylation. This is DCN1-like protein 3 from Pongo abelii (Sumatran orangutan).